Here is a 92-residue protein sequence, read N- to C-terminus: Small ribosomal subunit protein uS19 (92 aa).

This sequence belongs to the universal ribosomal protein uS19 family.

Functionally, protein S19 forms a complex with S13 that binds strongly to the 16S ribosomal RNA. This Rhodopseudomonas palustris (strain BisA53) protein is Small ribosomal subunit protein uS19.